Here is a 492-residue protein sequence, read N- to C-terminus: Proline--tRNA ligase (492 aa).

This sequence belongs to the class-II aminoacyl-tRNA synthetase family. ProS type 3 subfamily. Homodimer.

Its subcellular location is the cytoplasm. It catalyses the reaction tRNA(Pro) + L-proline + ATP = L-prolyl-tRNA(Pro) + AMP + diphosphate. Its function is as follows. Catalyzes the attachment of proline to tRNA(Pro) in a two-step reaction: proline is first activated by ATP to form Pro-AMP and then transferred to the acceptor end of tRNA(Pro). The polypeptide is Proline--tRNA ligase (Flavobacterium johnsoniae (strain ATCC 17061 / DSM 2064 / JCM 8514 / BCRC 14874 / CCUG 350202 / NBRC 14942 / NCIMB 11054 / UW101) (Cytophaga johnsonae)).